The chain runs to 437 residues: MSMFLDTAKISVQAGRGGDGMVAFRREKYVPNGGPWGGDGGKGGSVIFRVDEGLRTLMDFRYNRKFKAKSGEKGMTKGMHGRGAEDLIVFVPQGTTVRDAETGKVITDLVEHGQEVVIAKGGRGGRGNIRFATPRNPAPEIAENGEPGEERQLELELKILADVGLVGFPSVGKSTLLSVVSSAKPKIGAYHFTTIVPNLGMVRTKSGDSFAMADLPGLIEGASQGVGLGTQFLRHIERTRVILHVIDMSASEGRDPYEDYVSINNELETYNLRLMERPQIIVANKMDIPEAQENLKAFKKKLAAQYDEFDDLPMIFPISSLAHQGLENLLEATAELLAKTDEFLLYDESDLVDEEAYYGFAETEKDFEITRDDDATWVLSGEKLERLFVMTNMERDESIMKFARQLRGMGVDEALRERGAKDGDPVRIGKFEFEFVD.

An Obg domain is found at 2–160 (SMFLDTAKIS…RQLELELKIL (159 aa)). Residues 161–338 (ADVGLVGFPS…LLEATAELLA (178 aa)) form the OBG-type G domain. Residues 167–174 (GFPSVGKS), 192–196 (FTTIV), 214–217 (DLPG), 284–287 (NKMD), and 319–321 (SSL) each bind GTP. Residues serine 174 and threonine 194 each contribute to the Mg(2+) site. One can recognise an OCT domain in the interval 359–437 (GFAETEKDFE…IGKFEFEFVD (79 aa)).

It belongs to the TRAFAC class OBG-HflX-like GTPase superfamily. OBG GTPase family. Monomer. Mg(2+) serves as cofactor.

The protein resides in the cytoplasm. Its function is as follows. An essential GTPase which binds GTP, GDP and possibly (p)ppGpp with moderate affinity, with high nucleotide exchange rates and a fairly low GTP hydrolysis rate. Plays a role in control of the cell cycle, stress response, ribosome biogenesis and in those bacteria that undergo differentiation, in morphogenesis control. This chain is GTPase Obg, found in Streptococcus pyogenes serotype M1.